Reading from the N-terminus, the 743-residue chain is Amylovoran biosynthesis protein AmsF (743 aa).

Positions 1–27 (MKRRELIRTAFSTIVATAALSSVSARA) are cleaved as a signal peptide.

It to R.meliloti ExoP.

The protein resides in the periplasm. Its pathway is glycan metabolism; exopolysaccharide biosynthesis. Functionally, involved in the biosynthesis of amylovoran which functions as a virulence factor. May be involved in the polymerization or late modification of the repeating units. The protein is Amylovoran biosynthesis protein AmsF (amsF) of Erwinia amylovora (Fire blight bacteria).